A 652-amino-acid chain; its full sequence is UvrABC system protein C (652 aa).

In terms of domain architecture, GIY-YIG spans 37-116 (KSSGCYLFKD…IKTNKPYFNI (80 aa)). Residues 226–261 (DDLEIFLQKKMLQFSNDLDYENAAKIRDQISGLKLL) enclose the UVR domain.

It belongs to the UvrC family. In terms of assembly, interacts with UvrB in an incision complex.

Its subcellular location is the cytoplasm. Functionally, the UvrABC repair system catalyzes the recognition and processing of DNA lesions. UvrC both incises the 5' and 3' sides of the lesion. The N-terminal half is responsible for the 3' incision and the C-terminal half is responsible for the 5' incision. This is UvrABC system protein C from Prochlorococcus marinus (strain MIT 9312).